The following is a 157-amino-acid chain: Transcription elongation factor GreA (157 aa).

Positions 47 to 75 form a coiled coil; that stretch reads SGEYEDAKKAQALLEGRIRELKHLLSRAE.

The protein belongs to the GreA/GreB family.

Necessary for efficient RNA polymerase transcription elongation past template-encoded arresting sites. The arresting sites in DNA have the property of trapping a certain fraction of elongating RNA polymerases that pass through, resulting in locked ternary complexes. Cleavage of the nascent transcript by cleavage factors such as GreA or GreB allows the resumption of elongation from the new 3'terminus. GreA releases sequences of 2 to 3 nucleotides. This is Transcription elongation factor GreA from Chloroflexus aggregans (strain MD-66 / DSM 9485).